Reading from the N-terminus, the 284-residue chain is L-ribulose-5-phosphate 3-epimerase UlaE (284 aa).

This sequence belongs to the L-ribulose-5-phosphate 3-epimerase family.

The enzyme catalyses L-ribulose 5-phosphate = L-xylulose 5-phosphate. It participates in cofactor degradation; L-ascorbate degradation; D-xylulose 5-phosphate from L-ascorbate: step 3/4. Functionally, catalyzes the isomerization of L-xylulose-5-phosphate to L-ribulose-5-phosphate. Is involved in the anaerobic L-ascorbate utilization. This is L-ribulose-5-phosphate 3-epimerase UlaE from Shigella sonnei (strain Ss046).